The sequence spans 332 residues: Protein FAM131B (332 aa).

The tract at residues 1-22 (MDSTSSLHGSSLHRPSTEQTRT) is disordered. S47 bears the Phosphoserine mark. Positions 95 to 114 (PTIQPQHSHEAVRRDTDAYS) are disordered. Basic and acidic residues predominate over residues 101–111 (HSHEAVRRDTD). Phosphoserine occurs at positions 114 and 117. The interval 221–332 (LGPAFDDSQP…FDEEEGDANN (112 aa)) is disordered. Basic and acidic residues-rich tracts occupy residues 272–281 (PVEEEKRPLA) and 288–302 (AGCRDLESLSPREDP). Residues S295, S297, and S313 each carry the phosphoserine modification. T316 carries the post-translational modification Phosphothreonine. A phosphoserine mark is found at S317, S318, and S322. The segment covering 323-332 (FDEEEGDANN) has biased composition (acidic residues).

The protein belongs to the FAM131 family.

The chain is Protein FAM131B (Fam131b) from Mus musculus (Mouse).